A 184-amino-acid polypeptide reads, in one-letter code: Protein GrpE (184 aa).

The interval 1-26 (MTAPQEPVDSTPESGENAATPGLEDD) is disordered.

The protein belongs to the GrpE family. In terms of assembly, homodimer.

The protein localises to the cytoplasm. Functionally, participates actively in the response to hyperosmotic and heat shock by preventing the aggregation of stress-denatured proteins, in association with DnaK and GrpE. It is the nucleotide exchange factor for DnaK and may function as a thermosensor. Unfolded proteins bind initially to DnaJ; upon interaction with the DnaJ-bound protein, DnaK hydrolyzes its bound ATP, resulting in the formation of a stable complex. GrpE releases ADP from DnaK; ATP binding to DnaK triggers the release of the substrate protein, thus completing the reaction cycle. Several rounds of ATP-dependent interactions between DnaJ, DnaK and GrpE are required for fully efficient folding. In Bordetella bronchiseptica (strain ATCC BAA-588 / NCTC 13252 / RB50) (Alcaligenes bronchisepticus), this protein is Protein GrpE.